The sequence spans 482 residues: UDP-N-acetylmuramate--L-alanine ligase (482 aa).

Position 123 to 129 (123 to 129) interacts with ATP; sequence GTHGKTT.

It belongs to the MurCDEF family.

The protein localises to the cytoplasm. The enzyme catalyses UDP-N-acetyl-alpha-D-muramate + L-alanine + ATP = UDP-N-acetyl-alpha-D-muramoyl-L-alanine + ADP + phosphate + H(+). It functions in the pathway cell wall biogenesis; peptidoglycan biosynthesis. Functionally, cell wall formation. This Pseudomonas putida (strain ATCC 47054 / DSM 6125 / CFBP 8728 / NCIMB 11950 / KT2440) protein is UDP-N-acetylmuramate--L-alanine ligase.